A 532-amino-acid chain; its full sequence is KICSTOR complex protein ITFG2 (532 aa).

An FG-GAP 1; atypical repeat occupies 19 to 48; sequence FPHAICLGDVDNDTLNELVVGDTSGKLSVY. Phosphoserine is present on Ser104. An FG-GAP 2; atypical repeat occupies 126 to 155; sequence NTKVMLISDIDGDGRCELVVGYTDRVVRAF. The disordered stretch occupies residues 248–271; the sequence is PHPQQERLHSPHRQHQASHSPDSS.

In terms of assembly, part of the KICSTOR complex composed of KPTN, ITFG2, KICS2 and SZT2. SZT2 probably serves as a link between the other three proteins in the KICSTOR complex and may mediate the direct interaction with the GATOR complex via GATOR1. The KICSTOR complex interacts directly with the GATOR1 complex and most probably indirectly with the GATOR2 complex in an amino acid-independent manner.

It is found in the lysosome membrane. As part of the KICSTOR complex functions in the amino acid-sensing branch of the TORC1 signaling pathway. Recruits, in an amino acid-independent manner, the GATOR1 complex to the lysosomal membranes and allows its interaction with GATOR2 and the RAG GTPases. Functions upstream of the RAG GTPases and is required to negatively regulate mTORC1 signaling in absence of amino acids. In absence of the KICSTOR complex mTORC1 is constitutively localized to the lysosome and activated. The KICSTOR complex is also probably involved in the regulation of mTORC1 by glucose. The sequence is that of KICSTOR complex protein ITFG2 from Bos taurus (Bovine).